The following is an 890-amino-acid chain: Translation initiation factor IF-2 (890 aa).

The segment at 45-304 (LIDHLNQKNS…LQQGFQKPAQ (260 aa)) is disordered. Over residues 67 to 81 (STLNIPGTGGKSKSV) the composition is skewed to polar residues. Residues 92–217 (VKRDPQEAER…RMAEENKWTD (126 aa)) are compositionally biased toward basic and acidic residues. Residues 252–266 (GRGRNAKAARPKKGN) are compositionally biased toward basic residues. The segment covering 267-280 (KHSESKADREEARA) has biased composition (basic and acidic residues). Residues 389-558 (PRAPVVTIMG…LLQAEVLELK (170 aa)) enclose the tr-type G domain. Residues 398–405 (GHVDHGKT) are G1. 398–405 (GHVDHGKT) contacts GTP. The interval 423-427 (GITQH) is G2. A G3 region spans residues 444–447 (DTPG). GTP contacts are provided by residues 444–448 (DTPGH) and 498–501 (NKID). The tract at residues 498–501 (NKID) is G4. The G5 stretch occupies residues 534-536 (SAK). An N6-acetyllysine modification is found at Lys808.

This sequence belongs to the TRAFAC class translation factor GTPase superfamily. Classic translation factor GTPase family. IF-2 subfamily.

The protein resides in the cytoplasm. In terms of biological role, one of the essential components for the initiation of protein synthesis. Protects formylmethionyl-tRNA from spontaneous hydrolysis and promotes its binding to the 30S ribosomal subunits. Also involved in the hydrolysis of GTP during the formation of the 70S ribosomal complex. The polypeptide is Translation initiation factor IF-2 (Escherichia fergusonii (strain ATCC 35469 / DSM 13698 / CCUG 18766 / IAM 14443 / JCM 21226 / LMG 7866 / NBRC 102419 / NCTC 12128 / CDC 0568-73)).